Consider the following 110-residue polypeptide: MSASELATSYSALILADEGIEITSDKLLSLTKAANVDVEPIWATIFAKALEGKDLKELLLNIGSAAAAPAAGGAGAPAAAAGGEAAAEEQKEEAKEEEESDEDMGFGLFD.

The span at 69-85 (PAAGGAGAPAAAAGGEA) shows a compositional bias: low complexity. Residues 69–110 (PAAGGAGAPAAAAGGEAAAEEQKEEAKEEEESDEDMGFGLFD) are disordered. Over residues 95–104 (KEEEESDEDM) the composition is skewed to acidic residues.

The protein belongs to the eukaryotic ribosomal protein P1/P2 family. In terms of assembly, component of the large ribosomal subunit (LSU). Mature yeast ribosomes consist of a small (40S) and a large (60S) subunit. The 40S small subunit contains 1 molecule of ribosomal RNA (18S rRNA) and at least 33 different proteins. The large 60S subunit contains 3 rRNA molecules (25S, 5.8S and 5S rRNA) and at least 46 different proteins. The acidic ribosomal P-proteins form the stalk structure of the 60S subunit. They are organized as a pentameric complex in which uL10/P0 interacts with 2 heterodimers of P1 and P2 proteins.

The protein localises to the cytoplasm. Its function is as follows. Component of the ribosome, a large ribonucleoprotein complex responsible for the synthesis of proteins in the cell. The small ribosomal subunit (SSU) binds messenger RNAs (mRNAs) and translates the encoded message by selecting cognate aminoacyl-transfer RNA (tRNA) molecules. The large subunit (LSU) contains the ribosomal catalytic site termed the peptidyl transferase center (PTC), which catalyzes the formation of peptide bonds, thereby polymerizing the amino acids delivered by tRNAs into a polypeptide chain. The nascent polypeptides leave the ribosome through a tunnel in the LSU and interact with protein factors that function in enzymatic processing, targeting, and the membrane insertion of nascent chains at the exit of the ribosomal tunnel. This Schizosaccharomyces pombe (strain 972 / ATCC 24843) (Fission yeast) protein is Large ribosomal subunit protein P1B (rpp102).